We begin with the raw amino-acid sequence, 369 residues long: Glutamate 5-kinase (369 aa).

An ATP-binding site is contributed by K11. S51, D138, and N150 together coordinate substrate. Residues 170–171 (TD) and 212–218 (TGGMATK) each bind ATP. Residues 277 to 355 (KGSIVIDEGA…QDIYAVLGYE (79 aa)) enclose the PUA domain.

Belongs to the glutamate 5-kinase family.

Its subcellular location is the cytoplasm. The enzyme catalyses L-glutamate + ATP = L-glutamyl 5-phosphate + ADP. It functions in the pathway amino-acid biosynthesis; L-proline biosynthesis; L-glutamate 5-semialdehyde from L-glutamate: step 1/2. Functionally, catalyzes the transfer of a phosphate group to glutamate to form L-glutamate 5-phosphate. This chain is Glutamate 5-kinase, found in Aliivibrio fischeri (strain ATCC 700601 / ES114) (Vibrio fischeri).